The following is a 461-amino-acid chain: Probable carboxypeptidase MGYG_04702 (461 aa).

A signal peptide spans 1–20 (MQKTYLLALVSLLASSLVEA). Asparagine 48 and asparagine 99 each carry an N-linked (GlcNAc...) asparagine glycan. Aspartate 176 is a binding site for Zn(2+). Glutamate 208 functions as the Proton acceptor in the catalytic mechanism. Glutamate 209 contributes to the Zn(2+) binding site. The N-linked (GlcNAc...) asparagine glycan is linked to asparagine 396.

This sequence belongs to the peptidase M20A family. It depends on Zn(2+) as a cofactor.

Its subcellular location is the secreted. This chain is Probable carboxypeptidase MGYG_04702, found in Arthroderma gypseum (strain ATCC MYA-4604 / CBS 118893) (Microsporum gypseum).